The sequence spans 333 residues: Protein XAP5 CIRCADIAN TIMEKEEPER (333 aa).

Coiled-coil stretches lie at residues 12–43 (AQDAVKIRRLEKQREAERRKIEELKNKSSDGQ) and 70–116 (TREQ…VRGD). Over residues 89–98 (EKEKLQKLQQ) the composition is skewed to basic and acidic residues. Residues 89–171 (EKEKLQKLQQ…REREAEEQAE (83 aa)) are disordered. The segment covering 123–136 (DEIENGSDEDEFEN) has biased composition (acidic residues). The segment covering 160 to 171 (PDREREAEEQAE) has biased composition (basic and acidic residues).

This sequence belongs to the FAM50 family.

The protein resides in the nucleus. In terms of biological role, involved in light regulation of the circadian clock and photomorphogenesis. The protein is Protein XAP5 CIRCADIAN TIMEKEEPER (XCT) of Oryza sativa subsp. indica (Rice).